A 331-amino-acid polypeptide reads, in one-letter code: Probable allantoicase (331 aa).

This sequence belongs to the allantoicase family.

The enzyme catalyses allantoate + H2O = (S)-ureidoglycolate + urea. The protein operates within nitrogen metabolism; (S)-allantoin degradation; (S)-ureidoglycolate from allantoate (aminidohydrolase route): step 1/1. The protein is Probable allantoicase of Pseudomonas fluorescens (strain Pf0-1).